The following is a 137-amino-acid chain: NADH-quinone oxidoreductase subunit A (137 aa).

Helical transmembrane passes span 12 to 32 (WAFAVFLLGVCGLIAFMLGVS), 68 to 88 (LVAMLFVIFDVEALFLFAWAV), and 94 to 114 (GWVGLVGATVFITILFAGLVY).

It belongs to the complex I subunit 3 family. As to quaternary structure, NDH-1 is composed of 13 different subunits. Subunits NuoA, H, J, K, L, M, N constitute the membrane sector of the complex.

It localises to the cell inner membrane. It carries out the reaction a quinone + NADH + 5 H(+)(in) = a quinol + NAD(+) + 4 H(+)(out). Its function is as follows. NDH-1 shuttles electrons from NADH, via FMN and iron-sulfur (Fe-S) centers, to quinones in the respiratory chain. The immediate electron acceptor for the enzyme in this species is believed to be ubiquinone. Couples the redox reaction to proton translocation (for every two electrons transferred, four hydrogen ions are translocated across the cytoplasmic membrane), and thus conserves the redox energy in a proton gradient. In Ectopseudomonas mendocina (strain ymp) (Pseudomonas mendocina), this protein is NADH-quinone oxidoreductase subunit A.